Reading from the N-terminus, the 493-residue chain is Cobyric acid synthase (493 aa).

One can recognise a GATase cobBQ-type domain in the interval 246-440 (PIDIAVIKMP…IHGVFDGVSF (195 aa)). The Nucleophile role is filled by Cys-326. His-432 is a catalytic residue.

The protein belongs to the CobB/CobQ family. CobQ subfamily.

It participates in cofactor biosynthesis; adenosylcobalamin biosynthesis. Catalyzes amidations at positions B, D, E, and G on adenosylcobyrinic A,C-diamide. NH(2) groups are provided by glutamine, and one molecule of ATP is hydrogenolyzed for each amidation. The polypeptide is Cobyric acid synthase (Clostridium botulinum (strain Langeland / NCTC 10281 / Type F)).